Here is a 651-residue protein sequence, read N- to C-terminus: Mediator of RNA polymerase II transcription subunit 17 (651 aa).

The interval 51 to 83 is disordered; that stretch reads QGSGSEEEEAAGAEGDAQDWAGAGSSADQDDEE. Low complexity predominate over residues 62-74; it reads GAEGDAQDWAGAG.

This sequence belongs to the Mediator complex subunit 17 family. As to quaternary structure, component of the Mediator complex, which is composed of MED1, MED4, MED6, MED7, MED8, MED9, MED10, MED11, MED12, MED13, MED13L, MED14, MED15, MED16, MED17, MED18, MED19, MED20, MED21, MED22, MED23, MED24, MED25, MED26, MED27, MED29, MED30, MED31, CCNC, CDK8 and CDC2L6/CDK11. The MED12, MED13, CCNC and CDK8 subunits form a distinct module termed the CDK8 module. Mediator containing the CDK8 module is less active than Mediator lacking this module in supporting transcriptional activation. Individual preparations of the Mediator complex lacking one or more distinct subunits have been variously termed ARC, CRSP, DRIP, PC2, SMCC and TRAP. Interacts with GATA1, PPARG and STAT2.

It localises to the nucleus. Functionally, component of the Mediator complex, a coactivator involved in the regulated transcription of nearly all RNA polymerase II-dependent genes. Mediator functions as a bridge to convey information from gene-specific regulatory proteins to the basal RNA polymerase II transcription machinery. Mediator is recruited to promoters by direct interactions with regulatory proteins and serves as a scaffold for the assembly of a functional preinitiation complex with RNA polymerase II and the general transcription factors. The sequence is that of Mediator of RNA polymerase II transcription subunit 17 (MED17) from Bos taurus (Bovine).